A 116-amino-acid chain; its full sequence is Nucleoid-associated protein P9515_00191 (116 aa).

Basic and acidic residues predominate over residues 89–98 (STTTMKERMN). Residues 89–116 (STTTMKERMNDLTGGLNLNLPGLDNNDS) form a disordered region. Low complexity predominate over residues 99–116 (DLTGGLNLNLPGLDNNDS).

It belongs to the YbaB/EbfC family. In terms of assembly, homodimer.

Its subcellular location is the cytoplasm. The protein localises to the nucleoid. Functionally, binds to DNA and alters its conformation. May be involved in regulation of gene expression, nucleoid organization and DNA protection. The polypeptide is Nucleoid-associated protein P9515_00191 (Prochlorococcus marinus (strain MIT 9515)).